A 904-amino-acid chain; its full sequence is MATIHVDGKELEVDGADNLLQACLSLGLDIPYFCWHPALGSVGACRQCAVKQYTDENDKRGRIVMSCMTPATDGSWISIDDEEAKVFRASVVEWLMTNHPHDCPVCEEGGHCHLQDMTVMTGHNERRYRFTKRTHQNQDLGPFISHEMNRCIACYRCVRFYKDYAGGTDLGVFGAHDNVYFGRVEDGTLESEFSGNLTEVCPTGVFTDKTHSERYNRKWDMQFSPSICHGCSSGCNISPGERYGELRRIENRFNGSVNQYFLCDRGRFGYGYVNRKDRPRQPLLANGAKLSLDQALDKAAELLRGRNIVGIGSPRASLESNYALRELVGAEHFYSGIEAGELERIRLVLQVLKDSPLPVPNMRDIEDHDAVFVLGEDLTQTAARMALALRQSVKGKAEDMADAMRVQPWLDAAVKNIGQHALNPLFIASLAETKLDDVAEECVHAAPDDLARIGFAVAHALDASAPAVDGLDSEAAALAQRIADALLAAKRPLIIAGTSLGSKALIEAAANIAKALKLREKNGSISLIVPEANSLGLAMLGGESVDAALQAVIDGSADAIVVLENDLYTRTDKAKVDAALNAAKVLIVADHQKTATTDRAHLVLPAASFAEGDGTLVSQEGRAQRFFQVFDPQYLDASILVHEGWRWLHALRATLLDQPIDWTQLDHVTAAVASSSPQLAAIVDAAPSASFRIKGLKLAREPLRYSGRTAMRADISVHEPRTSQDNDTAFSFSMEGYSGSTEPRSQVPFAWSPGWNSPQAWNKFQDEVGGHLRAGDPGTRLIESQGDHLSWFASVPRAFNPAPGTWQVVPFHHLFGSEENSSKAAPVQERIPAAYVSLAKSEADRLGVNDGALLSLNVAGQTLRLPLRINEELGAGLVALPAGLAGIPPAIFGKTVDGLQEAAQ.

The region spanning 1–83 (MATIHVDGKE…GSWISIDDEE (83 aa)) is the 2Fe-2S ferredoxin-type domain. Cys-34, Cys-45, Cys-48, and Cys-67 together coordinate [2Fe-2S] cluster. The 40-residue stretch at 83 to 122 (EAKVFRASVVEWLMTNHPHDCPVCEEGGHCHLQDMTVMTG) folds into the 4Fe-4S His(Cys)3-ligated-type domain. Residues His-99, Cys-103, Cys-106, Cys-112, Cys-151, Cys-154, Cys-157, Cys-201, Cys-228, Cys-231, Cys-235, and Cys-263 each contribute to the [4Fe-4S] cluster site. The 4Fe-4S Mo/W bis-MGD-type domain maps to 221-277 (MQFSPSICHGCSSGCNISPGERYGELRRIENRFNGSVNQYFLCDRGRFGYGYVNRKD).

Belongs to the complex I 75 kDa subunit family. In terms of assembly, composed of 13 different subunits. Subunits NuoCD, E, F, and G constitute the peripheral sector of the complex. Requires [2Fe-2S] cluster as cofactor. [4Fe-4S] cluster serves as cofactor.

The catalysed reaction is a quinone + NADH + 5 H(+)(in) = a quinol + NAD(+) + 4 H(+)(out). Its function is as follows. NDH-1 shuttles electrons from NADH, via FMN and iron-sulfur (Fe-S) centers, to quinones in the respiratory chain. The immediate electron acceptor for the enzyme in this species is believed to be ubiquinone. Couples the redox reaction to proton translocation (for every two electrons transferred, four hydrogen ions are translocated across the cytoplasmic membrane), and thus conserves the redox energy in a proton gradient. Required for plants roots colonization. The protein is NADH-quinone oxidoreductase subunit G (nuoG) of Pseudomonas fluorescens.